Consider the following 234-residue polypeptide: Thymidylate kinase (234 aa).

21-28 (GGEGTGKS) contributes to the ATP binding site.

This sequence belongs to the thymidylate kinase family.

The catalysed reaction is dTMP + ATP = dTDP + ADP. Its function is as follows. Phosphorylation of dTMP to form dTDP in both de novo and salvage pathways of dTTP synthesis. This is Thymidylate kinase from Rhizobium meliloti (strain 1021) (Ensifer meliloti).